Consider the following 1938-residue polypeptide: Myosin-1 (1938 aa).

Positions D33 to P82 constitute a Myosin N-terminal SH3-like domain. Phosphothreonine is present on residues T64 and T69. One can recognise a Myosin motor domain in the interval D86–D781. K130 is modified (N6,N6,N6-trimethyllysine). G179 to T186 provides a ligand contact to ATP. Position 389 is a phosphotyrosine (Y389). Position 419 is a phosphothreonine (T419). The residue at position 424 (Y424) is a Phosphotyrosine. S625 is subject to Phosphoserine. Residues L658 to E680 are actin-binding. Position 756 is a pros-methylhistidine (H756). Positions K760–G774 are actin-binding. The IQ domain occupies L784–S813. Residues L842–E1938 are a coiled coil. S1091 and S1095 each carry phosphoserine. Disordered regions lie at residues E1124–L1146 and R1152–E1171. Positions A1127–L1146 are enriched in basic and acidic residues. A phosphoserine mark is found at S1161 and S1236. T1240 carries the post-translational modification Phosphothreonine. Position 1242 is a phosphoserine (S1242). T1254 bears the Phosphothreonine mark. The residue at position 1260 (S1260) is a Phosphoserine. The residue at position 1285 (T1285) is a Phosphothreonine. Phosphoserine is present on residues S1291, S1302, and S1305. The residue at position 1463 (Y1463) is a Phosphotyrosine. A Phosphothreonine modification is found at T1466. Phosphoserine is present on S1473. Y1491 carries the post-translational modification Phosphotyrosine. At S1494 the chain carries Phosphoserine. The residue at position 1500 (T1500) is a Phosphothreonine. S1513 carries the phosphoserine modification. A Phosphothreonine modification is found at T1516. Phosphoserine is present on residues S1541, S1553, S1573, S1713, and S1725. T1729 and T1735 each carry phosphothreonine. S1738 is subject to Phosphoserine.

Belongs to the TRAFAC class myosin-kinesin ATPase superfamily. Myosin family. In terms of assembly, muscle myosin is a hexameric protein that consists of 2 heavy chain subunits (MHC), 2 alkali light chain subunits (MLC) and 2 regulatory light chain subunits (MLC-2). Interacts with SLC26A5.

Its subcellular location is the cytoplasm. It localises to the myofibril. Required for normal hearing. It plays a role in cochlear amplification of auditory stimuli, likely through the positive regulation of prestin (SLC26A5) activity and outer hair cell (OHC) electromotility. The protein is Myosin-1 (MYH1) of Equus caballus (Horse).